Consider the following 765-residue polypeptide: Probable exo-1,4-beta-xylosidase bxlB (765 aa).

A signal peptide spans Met-1–Ala-25. Asn-67 and Asn-107 each carry an N-linked (GlcNAc...) asparagine glycan. The active site involves Asp-293. Residues Asn-345, Asn-412, Asn-423, Asn-464, and Asn-761 are each glycosylated (N-linked (GlcNAc...) asparagine).

It belongs to the glycosyl hydrolase 3 family.

The protein resides in the secreted. The catalysed reaction is Hydrolysis of (1-&gt;4)-beta-D-xylans, to remove successive D-xylose residues from the non-reducing termini.. It functions in the pathway glycan degradation; xylan degradation. Functionally, xylan 1,4-beta-xylosidase involved in the hydrolysis of xylan, a major structural heterogeneous polysaccharide found in plant biomass representing the second most abundant polysaccharide in the biosphere, after cellulose. This Aspergillus terreus (strain NIH 2624 / FGSC A1156) protein is Probable exo-1,4-beta-xylosidase bxlB (bxlB).